Here is a 307-residue protein sequence, read N- to C-terminus: Pantothenate kinase (307 aa).

G87–S94 contributes to the ATP binding site.

This sequence belongs to the prokaryotic pantothenate kinase family.

The protein localises to the cytoplasm. It catalyses the reaction (R)-pantothenate + ATP = (R)-4'-phosphopantothenate + ADP + H(+). Its pathway is cofactor biosynthesis; coenzyme A biosynthesis; CoA from (R)-pantothenate: step 1/5. The sequence is that of Pantothenate kinase from Vibrio vulnificus (strain YJ016).